The sequence spans 1111 residues: Receptor-type guanylate cyclase gcy-7 (1111 aa).

The N-terminal stretch at Met-1 to Pro-24 is a signal peptide. Over Gln-25–Leu-488 the chain is Extracellular. Residues Asn-80, Asn-300, Asn-326, Asn-353, Asn-389, Asn-407, Asn-430, and Asn-441 are each glycosylated (N-linked (GlcNAc...) asparagine). A helical membrane pass occupies residues Ile-489–Ile-509. The Cytoplasmic segment spans residues Tyr-510–Asp-1111. Positions Gln-536 to Asn-838 constitute a Protein kinase domain. ATP contacts are provided by residues Lys-542–Arg-550 and Lys-568. A Guanylate cyclase domain is found at Thr-896–Glu-1026.

The protein belongs to the adenylyl cyclase class-4/guanylyl cyclase family. Expressed asymmetrically in ASE left (ASEL) sensory neuron. Expressed in excretory canal cell.

The protein resides in the cell membrane. The enzyme catalyses GTP = 3',5'-cyclic GMP + diphosphate. Its function is as follows. Guanylate cyclase involved in the production of the second messenger cGMP. Unlike other guanylate cyclases expressed in ASE neurons, may not play a role in chemotaxis responses toward salt ions in ASEL (ASE left) sensory neurons. The polypeptide is Receptor-type guanylate cyclase gcy-7 (Caenorhabditis elegans).